Here is a 211-residue protein sequence, read N- to C-terminus: Protein GrpE (211 aa).

The segment covering 1–13 (MVDKDEEQIKQNV) has biased composition (basic and acidic residues). The interval 1–38 (MVDKDEEQIKQNVEEDLSSTVEQTGEENIEFPSAPNHP) is disordered.

This sequence belongs to the GrpE family. As to quaternary structure, homodimer.

The protein resides in the cytoplasm. Functionally, participates actively in the response to hyperosmotic and heat shock by preventing the aggregation of stress-denatured proteins, in association with DnaK and GrpE. It is the nucleotide exchange factor for DnaK and may function as a thermosensor. Unfolded proteins bind initially to DnaJ; upon interaction with the DnaJ-bound protein, DnaK hydrolyzes its bound ATP, resulting in the formation of a stable complex. GrpE releases ADP from DnaK; ATP binding to DnaK triggers the release of the substrate protein, thus completing the reaction cycle. Several rounds of ATP-dependent interactions between DnaJ, DnaK and GrpE are required for fully efficient folding. This chain is Protein GrpE, found in Protochlamydia amoebophila (strain UWE25).